Consider the following 374-residue polypeptide: Chaperone protein DnaJ (374 aa).

Residues 5–70 form the J domain; it reads DYYEVLGVNL…RKRASYDQFG (66 aa). A CR-type zinc finger spans residues 133–210; that stretch reads GLSRTIKVPT…CHGQGRQQQT (78 aa). Zn(2+)-binding residues include Cys146, Cys149, Cys162, Cys165, Cys184, Cys187, Cys198, and Cys201. CXXCXGXG motif repeat units lie at residues 146–153, 162–169, 184–191, and 198–205; these read CKTCNGSG, CPRCNGSG, CSVCRGRG, and CTDCHGQG.

This sequence belongs to the DnaJ family. As to quaternary structure, homodimer. Requires Zn(2+) as cofactor.

Its subcellular location is the cytoplasm. Functionally, participates actively in the response to hyperosmotic and heat shock by preventing the aggregation of stress-denatured proteins and by disaggregating proteins, also in an autonomous, DnaK-independent fashion. Unfolded proteins bind initially to DnaJ; upon interaction with the DnaJ-bound protein, DnaK hydrolyzes its bound ATP, resulting in the formation of a stable complex. GrpE releases ADP from DnaK; ATP binding to DnaK triggers the release of the substrate protein, thus completing the reaction cycle. Several rounds of ATP-dependent interactions between DnaJ, DnaK and GrpE are required for fully efficient folding. Also involved, together with DnaK and GrpE, in the DNA replication of plasmids through activation of initiation proteins. The protein is Chaperone protein DnaJ of Coxiella burnetii (strain RSA 331 / Henzerling II).